The primary structure comprises 295 residues: Phosphatidylglycerol--prolipoprotein diacylglyceryl transferase (295 aa).

The next 7 helical transmembrane spans lie at 17–37 (IKVH…WLLG), 57–77 (LLFY…MLFY), 92–112 (VWDG…ACWW), 127–147 (FMAP…FIGA), 196–216 (QLYE…AVSA), 222–242 (YLVG…VEFV), and 255–275 (WLTR…VLLV). Position 140 (Arg-140) interacts with a 1,2-diacyl-sn-glycero-3-phospho-(1'-sn-glycerol).

Belongs to the Lgt family.

It localises to the cell inner membrane. The enzyme catalyses L-cysteinyl-[prolipoprotein] + a 1,2-diacyl-sn-glycero-3-phospho-(1'-sn-glycerol) = an S-1,2-diacyl-sn-glyceryl-L-cysteinyl-[prolipoprotein] + sn-glycerol 1-phosphate + H(+). It participates in protein modification; lipoprotein biosynthesis (diacylglyceryl transfer). Functionally, catalyzes the transfer of the diacylglyceryl group from phosphatidylglycerol to the sulfhydryl group of the N-terminal cysteine of a prolipoprotein, the first step in the formation of mature lipoproteins. This chain is Phosphatidylglycerol--prolipoprotein diacylglyceryl transferase, found in Stenotrophomonas maltophilia (strain R551-3).